The primary structure comprises 72 residues: Translation initiation factor IF-1 (72 aa).

Positions 1 to 72 (MAKEDNIEMQ…SKGRIVFRSR (72 aa)) constitute an S1-like domain.

This sequence belongs to the IF-1 family. As to quaternary structure, component of the 30S ribosomal translation pre-initiation complex which assembles on the 30S ribosome in the order IF-2 and IF-3, IF-1 and N-formylmethionyl-tRNA(fMet); mRNA recruitment can occur at any time during PIC assembly.

Its subcellular location is the cytoplasm. Functionally, one of the essential components for the initiation of protein synthesis. Stabilizes the binding of IF-2 and IF-3 on the 30S subunit to which N-formylmethionyl-tRNA(fMet) subsequently binds. Helps modulate mRNA selection, yielding the 30S pre-initiation complex (PIC). Upon addition of the 50S ribosomal subunit IF-1, IF-2 and IF-3 are released leaving the mature 70S translation initiation complex. The chain is Translation initiation factor IF-1 from Klebsiella pneumoniae subsp. pneumoniae (strain ATCC 700721 / MGH 78578).